The sequence spans 129 residues: Basic blue protein (129 aa).

Residues M1 to A33 form the signal peptide. Positions A34–V129 constitute a Phytocyanin domain. Cu cation contacts are provided by H72, C112, H117, and M122. Cysteines 85 and 118 form a disulfide.

Expressed in the inflorescence and in the transmitting tract of the pistil. Detected in roots, stems, cauline leaves, cotyledons, hypocotyls, guard cells, pistils, sepals, stamen filaments and vascular bundles of roots but not of leaves. Not expressed in petals, anthers or pollen.

It is found in the secreted. It localises to the extracellular space. The protein resides in the extracellular matrix. In terms of biological role, forms a concentration gradient along the pollen tube growth path, with a lower level in the stigma papilla cell wall and a higher level in the transmitting tract extracellular matix of the style. In Arabidopsis thaliana (Mouse-ear cress), this protein is Basic blue protein (ARPN).